Reading from the N-terminus, the 298-residue chain is NAD-dependent L-serine dehydrogenase (298 aa).

Residues 2 to 31, 65 to 66, P66, and T96 contribute to the NAD(+) site; these read KQIAFIGLGHMGAPMATNLLKAGYLLNVFD and LP. The active site involves K171. Residue K246 coordinates NAD(+).

Belongs to the HIBADH-related family. In terms of assembly, homotetramer, dimer of dimers.

It catalyses the reaction L-serine + NAD(+) = aminoacetaldehyde + CO2 + NADH. The protein operates within amino-acid degradation. Its function is as follows. NAD-dependent L-serine dehydrogenase that catalyzes the oxidation of L-serine and methyl-L-serine and is possibly involved in serine catabolism. Has low activity toward beta-hydroxyisobutyrate. This is NAD-dependent L-serine dehydrogenase from Pseudomonas aeruginosa (strain ATCC 15692 / DSM 22644 / CIP 104116 / JCM 14847 / LMG 12228 / 1C / PRS 101 / PAO1).